Consider the following 187-residue polypeptide: Peptidyl-tRNA hydrolase (187 aa).

Y14 is a tRNA binding site. Catalysis depends on H19, which acts as the Proton acceptor. The tRNA site is built by Y64, N66, and N112.

It belongs to the PTH family. As to quaternary structure, monomer.

The protein resides in the cytoplasm. It carries out the reaction an N-acyl-L-alpha-aminoacyl-tRNA + H2O = an N-acyl-L-amino acid + a tRNA + H(+). Functionally, hydrolyzes ribosome-free peptidyl-tRNAs (with 1 or more amino acids incorporated), which drop off the ribosome during protein synthesis, or as a result of ribosome stalling. In terms of biological role, catalyzes the release of premature peptidyl moieties from peptidyl-tRNA molecules trapped in stalled 50S ribosomal subunits, and thus maintains levels of free tRNAs and 50S ribosomes. The chain is Peptidyl-tRNA hydrolase from Clostridium acetobutylicum (strain ATCC 824 / DSM 792 / JCM 1419 / IAM 19013 / LMG 5710 / NBRC 13948 / NRRL B-527 / VKM B-1787 / 2291 / W).